A 500-amino-acid polypeptide reads, in one-letter code: NAD(P)H-quinone oxidoreductase chain 4, chloroplastic (500 aa).

A run of 14 helical transmembrane segments spans residues 4-24, 37-57, 87-107, 111-131, 134-154, 167-187, 208-228, 242-262, 272-292, 305-325, 330-350, 386-406, 416-436, and 462-482; these read FPWL…IFLL, LCIC…HFQL, IGPI…AWPV, AQLF…SFSS, LLLF…LLSM, FILY…GIGL, ALEV…LPII, HYST…YGLV, AHCL…IYAA, IAYS…SLSD, GAIL…FLAG, LALP…GIIT, ILIA…SLSM, and LFVS…PDFV.

The protein belongs to the complex I subunit 4 family.

The protein resides in the plastid. It localises to the chloroplast thylakoid membrane. The enzyme catalyses a plastoquinone + NADH + (n+1) H(+)(in) = a plastoquinol + NAD(+) + n H(+)(out). It carries out the reaction a plastoquinone + NADPH + (n+1) H(+)(in) = a plastoquinol + NADP(+) + n H(+)(out). The chain is NAD(P)H-quinone oxidoreductase chain 4, chloroplastic from Oenothera biennis (German evening primrose).